Here is a 166-residue protein sequence, read N- to C-terminus: Large ribosomal subunit protein uL10 (166 aa).

Belongs to the universal ribosomal protein uL10 family. In terms of assembly, part of the ribosomal stalk of the 50S ribosomal subunit. The N-terminus interacts with L11 and the large rRNA to form the base of the stalk. The C-terminus forms an elongated spine to which L12 dimers bind in a sequential fashion forming a multimeric L10(L12)X complex.

Its function is as follows. Forms part of the ribosomal stalk, playing a central role in the interaction of the ribosome with GTP-bound translation factors. The protein is Large ribosomal subunit protein uL10 of Pseudomonas fluorescens (strain Pf0-1).